The sequence spans 825 residues: Actin filament-associated protein 1-like 2 (825 aa).

The residue at position 56 (Tyr-56) is a Phosphotyrosine. Residues 62–163 (VNGEQNSASP…SKGKAAPYQW (102 aa)) form a disordered region. Over residues 80–94 (PLTNGEPSQHSSAPQ) the composition is skewed to polar residues. Thr-113 carries the phosphothreonine modification. 2 PH domains span residues 175–271 (DARI…EVSG) and 353–447 (SLET…SESG). At Ser-408 the chain carries Phosphoserine. At Tyr-413 the chain carries Phosphotyrosine. Ser-484 carries the phosphoserine modification. Residues 571-614 (TLTVDPKPGTTPEEPHTESPGDPEVQQRQPEVQESSEPIEPTPR) are disordered. A compositionally biased stretch (low complexity) spans 593–608 (PEVQQRQPEVQESSEP). Positions 657–754 (AEIKLGKNRT…VKDNLKKAEA (98 aa)) form a coiled coil. Residues 757–801 (VTLGTTVDTTHLDNMSPRPQPKAATPNPPPDSTPVNSASVLKNRP) are disordered. Over residues 759–769 (LGTTVDTTHLD) the composition is skewed to polar residues.

In terms of assembly, interacts with SRC. Interacts with LCK when tyrosine phosphorylated. Post-translationally, tyrosine phosphorylated (by SRC).

It localises to the cytoplasm. May play a role in a signaling cascade by enhancing the kinase activity of SRC. Contributes to SRC-regulated transcription activation. The sequence is that of Actin filament-associated protein 1-like 2 (Afap1l2) from Mus musculus (Mouse).